Reading from the N-terminus, the 362-residue chain is S-adenosylmethionine decarboxylase proenzyme (362 aa).

Residues Glu-11 and Glu-14 contribute to the active site. The Schiff-base intermediate with substrate; via pyruvic acid role is filled by Ser-71. Position 71 is a pyruvic acid (Ser); by autocatalysis (Ser-71). The active-site Proton donor; for catalytic activity is the Cys-85. Catalysis depends on proton acceptor; for processing activity residues Ser-234 and His-247.

It belongs to the eukaryotic AdoMetDC family. Requires pyruvate as cofactor. Is synthesized initially as an inactive proenzyme. Formation of the active enzyme involves a self-maturation process in which the active site pyruvoyl group is generated from an internal serine residue via an autocatalytic post-translational modification. Two non-identical subunits are generated from the proenzyme in this reaction, and the pyruvate is formed at the N-terminus of the alpha chain, which is derived from the carboxyl end of the proenzyme. The post-translation cleavage follows an unusual pathway, termed non-hydrolytic serinolysis, in which the side chain hydroxyl group of the serine supplies its oxygen atom to form the C-terminus of the beta chain, while the remainder of the serine residue undergoes an oxidative deamination to produce ammonia and the pyruvoyl group blocking the N-terminus of the alpha chain.

It carries out the reaction S-adenosyl-L-methionine + H(+) = S-adenosyl 3-(methylsulfanyl)propylamine + CO2. It functions in the pathway amine and polyamine biosynthesis; S-adenosylmethioninamine biosynthesis; S-adenosylmethioninamine from S-adenosyl-L-methionine: step 1/1. The sequence is that of S-adenosylmethionine decarboxylase proenzyme (SAMDC) from Ipomoea nil (Japanese morning glory).